The following is a 316-amino-acid chain: 4-hydroxy-3-methylbut-2-enyl diphosphate reductase (316 aa).

Cys17 serves as a coordination point for [4Fe-4S] cluster. (2E)-4-hydroxy-3-methylbut-2-enyl diphosphate contacts are provided by His46 and His79. Residues His46 and His79 each contribute to the dimethylallyl diphosphate site. The isopentenyl diphosphate site is built by His46 and His79. Residue Cys101 participates in [4Fe-4S] cluster binding. Residue His129 participates in (2E)-4-hydroxy-3-methylbut-2-enyl diphosphate binding. Position 129 (His129) interacts with dimethylallyl diphosphate. Residue His129 participates in isopentenyl diphosphate binding. Glu131 (proton donor) is an active-site residue. Residue Thr170 coordinates (2E)-4-hydroxy-3-methylbut-2-enyl diphosphate. A [4Fe-4S] cluster-binding site is contributed by Cys200. Residues Ser228, Ser229, Asn230, and Ser273 each coordinate (2E)-4-hydroxy-3-methylbut-2-enyl diphosphate. Dimethylallyl diphosphate contacts are provided by Ser228, Ser229, Asn230, and Ser273. The isopentenyl diphosphate site is built by Ser228, Ser229, Asn230, and Ser273.

The protein belongs to the IspH family. It depends on [4Fe-4S] cluster as a cofactor.

The enzyme catalyses isopentenyl diphosphate + 2 oxidized [2Fe-2S]-[ferredoxin] + H2O = (2E)-4-hydroxy-3-methylbut-2-enyl diphosphate + 2 reduced [2Fe-2S]-[ferredoxin] + 2 H(+). It catalyses the reaction dimethylallyl diphosphate + 2 oxidized [2Fe-2S]-[ferredoxin] + H2O = (2E)-4-hydroxy-3-methylbut-2-enyl diphosphate + 2 reduced [2Fe-2S]-[ferredoxin] + 2 H(+). The protein operates within isoprenoid biosynthesis; dimethylallyl diphosphate biosynthesis; dimethylallyl diphosphate from (2E)-4-hydroxy-3-methylbutenyl diphosphate: step 1/1. It participates in isoprenoid biosynthesis; isopentenyl diphosphate biosynthesis via DXP pathway; isopentenyl diphosphate from 1-deoxy-D-xylulose 5-phosphate: step 6/6. Its function is as follows. Catalyzes the conversion of 1-hydroxy-2-methyl-2-(E)-butenyl 4-diphosphate (HMBPP) into a mixture of isopentenyl diphosphate (IPP) and dimethylallyl diphosphate (DMAPP). Acts in the terminal step of the DOXP/MEP pathway for isoprenoid precursor biosynthesis. This Ruegeria pomeroyi (strain ATCC 700808 / DSM 15171 / DSS-3) (Silicibacter pomeroyi) protein is 4-hydroxy-3-methylbut-2-enyl diphosphate reductase.